Reading from the N-terminus, the 841-residue chain is Probable outer membrane usher protein EcpC (841 aa).

The first 29 residues, 1-29 (MPLRRFSPGLKAQFAFGMVFLFVQPDASA), serve as a signal peptide directing secretion.

This sequence belongs to the EcpC/MatD family.

Its function is as follows. Part of the ecpRABCDE operon, which encodes the E.coli common pilus (ECP). ECP is found in both commensal and pathogenic strains and plays a dual role in early-stage biofilm development and host cell recognition. The sequence is that of Probable outer membrane usher protein EcpC (ecpC) from Escherichia coli O127:H6 (strain E2348/69 / EPEC).